The chain runs to 445 residues: Trigger factor (445 aa).

Positions Gly172–Pro257 constitute a PPIase FKBP-type domain.

It belongs to the FKBP-type PPIase family. Tig subfamily.

The protein localises to the cytoplasm. It carries out the reaction [protein]-peptidylproline (omega=180) = [protein]-peptidylproline (omega=0). Its function is as follows. Involved in protein export. Acts as a chaperone by maintaining the newly synthesized protein in an open conformation. Functions as a peptidyl-prolyl cis-trans isomerase. The chain is Trigger factor from Polynucleobacter asymbioticus (strain DSM 18221 / CIP 109841 / QLW-P1DMWA-1) (Polynucleobacter necessarius subsp. asymbioticus).